The sequence spans 303 residues: Methionyl-tRNA formyltransferase (303 aa).

(6S)-5,6,7,8-tetrahydrofolate is bound at residue 110–113 (SLLP).

It belongs to the Fmt family.

The enzyme catalyses L-methionyl-tRNA(fMet) + (6R)-10-formyltetrahydrofolate = N-formyl-L-methionyl-tRNA(fMet) + (6S)-5,6,7,8-tetrahydrofolate + H(+). In terms of biological role, attaches a formyl group to the free amino group of methionyl-tRNA(fMet). The formyl group appears to play a dual role in the initiator identity of N-formylmethionyl-tRNA by promoting its recognition by IF2 and preventing the misappropriation of this tRNA by the elongation apparatus. The protein is Methionyl-tRNA formyltransferase of Ehrlichia ruminantium (strain Gardel).